The primary structure comprises 791 residues: uncharacterized protein (791 aa).

A helical membrane pass occupies residues 10–30 (LLTITIGAVAVSSILLGGIFY). Residues 56–76 (NLDYQKARPSIKDNNLKEIPK) show a composition bias toward basic and acidic residues. The interval 56–175 (NLDYQKARPS…PQPQQIPNQS (120 aa)) is disordered. Positions 77–97 (PKPQPKPEPQPTPFPDPIPTP) are enriched in pro residues. Positions 98–124 (PKKEELKKPEIKPEEPKKPEIKPEPIP) are enriched in basic and acidic residues. Positions 125–139 (KPKPQPIPQPTPPVE) are enriched in pro residues.

To U.parvum UU044.

It is found in the membrane. This is an uncharacterized protein from Ureaplasma parvum serovar 3 (strain ATCC 700970).